We begin with the raw amino-acid sequence, 66 residues long: Large ribosomal subunit protein bL28 (66 aa).

Belongs to the bacterial ribosomal protein bL28 family.

This is Large ribosomal subunit protein bL28 from Oenococcus oeni (strain ATCC BAA-331 / PSU-1).